Consider the following 522-residue polypeptide: Proactivator polypeptide-like 1 (522 aa).

The first 17 residues, 1-17 (MLCALILWSGLLGAARA), serve as a signal peptide directing secretion. A propeptide spanning residues 18-59 (SPISVPRECAKGSEVWCQDLQAAAKCRAVRHCQSAVWNKPTV) is cleaved from the precursor. A Saposin A-type 1 domain is found at 19 to 59 (PISVPRECAKGSEVWCQDLQAAAKCRAVRHCQSAVWNKPTV). Saposin B-type domains are found at residues 60–144 (KSLP…EPLQ), 183–261 (EGAV…ERES), 291–371 (LGLT…GSKR), and 393–474 (QGSF…HGPK). 3 cysteine pairs are disulfide-bonded: C64–C140, C67–C134, and C95–C107. A propeptide spanning residues 146 to 183 (HLAETTSERPLTQEDANEVMAPFLSNGALSFHPSQMPE) is cleaved from the precursor. Disulfide bonds link C187-C257, C190-C251, and C216-C227. N204 carries an N-linked (GlcNAc...) asparagine glycan. A propeptide spanning residues 261–290 (SAHWLTRVAAVDGVPSLEMEMPRTNELQMQ) is cleaved from the precursor. Cystine bridges form between C295/C367, C298/C361, and C326/C337. N312 is a glycosylation site (N-linked (GlcNAc...) (high mannose) asparagine). Positions 371–392 (RRARSISRAVATTPSLPVDEEN) are excised as a propeptide. 3 cysteine pairs are disulfide-bonded: C397–C470, C400–C464, and C428–C439. Positions 475–522 (TPLLGTDQCVMGPSFWCKSPEAAEMCNALEHCQRLVWKKPVSKINEQP) are excised as a propeptide. A Saposin A-type 2 domain is found at 476–516 (PLLGTDQCVMGPSFWCKSPEAAEMCNALEHCQRLVWKKPVS).

Its subcellular location is the secreted. Functionally, may activate the lysosomal degradation of sphingolipids. In Mus musculus (Mouse), this protein is Proactivator polypeptide-like 1 (Psapl1).